The chain runs to 99 residues: UPF0213 protein RBAM_000440 (99 aa).

The GIY-YIG domain maps to 4–79; the sequence is NSHFFYVLLC…KQLTRKKKEQ (76 aa).

The protein belongs to the UPF0213 family.

This chain is UPF0213 protein RBAM_000440, found in Bacillus velezensis (strain DSM 23117 / BGSC 10A6 / LMG 26770 / FZB42) (Bacillus amyloliquefaciens subsp. plantarum).